Consider the following 834-residue polypeptide: Ras GTPase-activating protein 3 (834 aa).

C2 domains follow at residues 1-112 (MAVE…DTWF) and 123-263 (VQGK…EAWY). A2 is modified (N-acetylalanine). Y66 carries the phosphotyrosine modification. S77 carries the phosphoserine modification. T110 carries the phosphothreonine modification. Positions 346–561 (GRVVPFISAI…DAVKNFLDLI (216 aa)) constitute a Ras-GAP domain. A PH domain is found at 576–677 (ILLKEGFMIK…WIDILTKVSQ (102 aa)). A Btk-type zinc finger spans residues 679-715 (NQKRLTVFHPSAYLNGHWLCCRASSDTAAGCTPCTGG). 4 residues coordinate Zn(2+): H687, C698, C699, and C709. 2 positions are modified to phosphoserine: S809 and S833.

In terms of tissue distribution, high levels in brain, lower in spleen and lung.

Inhibitory regulator of the Ras-cyclic AMP pathway. May bind inositol tetrakisphosphate (IP4). The protein is Ras GTPase-activating protein 3 (Rasa3) of Mus musculus (Mouse).